The primary structure comprises 64 residues: MKFTIVFLLLACVFAMAVATPGKPRPYSPRPTSHPRPIRVRREALAIEDHLAQAAIRPPPILPA.

The signal sequence occupies residues Met1–Ala19. A propeptide spanning residues Thr20 to Pro21 is cleaved from the precursor. Ser28 carries an O-linked (GalNAc...) serine glycan. The O-linked (GalNAc...) threonine glycan is linked to Thr32. The tract at residues Thr32 to Val40 is critical for inhibition of translation, possibly due to its role in mediating interactions with bacterial 23S rRNA and peptide chain release factors.

It belongs to the drosocin family. In terms of assembly, associates with the bacterial 50S ribosomal complex, occupying the nascent peptide exit tunnel. Interacts with bacterial 23S rRNA; this interaction is direct. Interacts with bacterial rplV/50S ribosomal protein L22; this interaction is direct. Interacts with bacterial prfA/peptide chain release factor RF1; while associated with the bacterial 50S ribosomal complex, this interaction is direct and traps RF1 on the ribosome, inhibiting further translation. In terms of processing, proteolytically cleaved at a pair of basic residues corresponding to the RXK/RR optimal cleavage site for furin proteases to produce two distinct antibacterial peptides. Post-translationally, O-glycosylated. O-glycosylation may be required for efficient uptake by target bacterial cells. Monosaccharide modification of Thr-32 provides better antibacterial activity than disaccharide modification or no modification. O-glycosylation of Thr-32 is not essential for antimicrobial activity but enhances this activity by mediating interactions with the 23S rRNA and increasing the efficiency of translation inhibition.

The protein localises to the secreted. Antibacterial peptide with strong anti-Gram-negative bacteria activity. Significantly contributes to antibacterial activity against Enterobacter cloacae but not Providencia burhodogranariea. Inhibitor of bacterial translation machinery that targets translation termination in a prfA- or prfB-dependent manner. Binds within the nascent peptide exit tunnel of the bacterial large ribosomal subunit, potentially interfering with nascent chain translocation that occurs post-peptide bond formation. Binds prfA/RF1 (and potentially prfB/RF2), trapping it on the ribosome after release of the nascent polypeptide chain and preventing further translation. The resulting depletion of peptide chain release factors further disrupts bacterial translation by preventing ribosomal peptide chain release and inducing stop codon readthrough. Entry into target Escherichia coli cells requires the bacterial peptide antibiotic transporter sbmA. In terms of biological role, peptide with significant antibacterial activity against Providencia burhodogranariea but not Enterobacter cloacae. This is Drosocin antimicrobial peptides (Dro) from Drosophila simulans (Fruit fly).